Consider the following 459-residue polypeptide: Argininosuccinate lyase (459 aa).

The protein belongs to the lyase 1 family. Argininosuccinate lyase subfamily.

It localises to the cytoplasm. It catalyses the reaction 2-(N(omega)-L-arginino)succinate = fumarate + L-arginine. It functions in the pathway amino-acid biosynthesis; L-arginine biosynthesis; L-arginine from L-ornithine and carbamoyl phosphate: step 3/3. This Staphylococcus saprophyticus subsp. saprophyticus (strain ATCC 15305 / DSM 20229 / NCIMB 8711 / NCTC 7292 / S-41) protein is Argininosuccinate lyase.